A 423-amino-acid chain; its full sequence is MDNHNSSHQLYKKAMALVLAGGRGSRLYNLTDTRAKPAVYFGGKFRIIDFALSNCLNSGIRRIGVVTQYKSHSLLRHLQRGWGFLRGELNEFIDLLPAQQRVDEEHWYRGTADAVYQNIDILRSYGPEYVIVLAGDHIYKMDYSIMLRDHAQSGYKCTVGCVEIAKEEAYAFGIMGIDENRKITSFIEKPKKNAPTIPGTTDRCYASMGIYIFNSDYLYDLLEEDITNKESSHDFGKDIIPRVVSENQALAHPFSMSCVPRGEGIEPYWRDVGTIDAFWEANLDLAANMPELNIYDKDWPVWTAQEQLPPAKFVPDRNGNHGVITNTLASGGCIVLGSEISKSLMFSKVRVLAGCKIDQCVIMPEVVVGENCRLKKVVIDKGCDIPAGMVIGEDPIEDAKNFYRTDKGVVLVTKKMIDELKEK.

Residues Y108, G173, 188–189, and S207 contribute to the alpha-D-glucose 1-phosphate site; that span reads EK.

The protein belongs to the bacterial/plant glucose-1-phosphate adenylyltransferase family. Homotetramer.

The catalysed reaction is alpha-D-glucose 1-phosphate + ATP + H(+) = ADP-alpha-D-glucose + diphosphate. Its pathway is glycan biosynthesis; glycogen biosynthesis. Its function is as follows. Involved in the biosynthesis of ADP-glucose, a building block required for the elongation reactions to produce glycogen. Catalyzes the reaction between ATP and alpha-D-glucose 1-phosphate (G1P) to produce pyrophosphate and ADP-Glc. The chain is Glucose-1-phosphate adenylyltransferase from Francisella tularensis subsp. holarctica (strain FTNF002-00 / FTA).